The chain runs to 391 residues: 1-deoxy-D-xylulose 5-phosphate reductoisomerase (391 aa).

Residue N109 participates in NADPH binding. 1-deoxy-D-xylulose 5-phosphate is bound at residue K110. NADPH is bound at residue E111. Residue D135 participates in Mn(2+) binding. 4 residues coordinate 1-deoxy-D-xylulose 5-phosphate: S136, E137, S171, and H194. E137 contacts Mn(2+). An NADPH-binding site is contributed by G200. The 1-deoxy-D-xylulose 5-phosphate site is built by S207, N212, R213, and E216. A Mn(2+)-binding site is contributed by E216.

It belongs to the DXR family. Homodimer. Mg(2+) serves as cofactor. Requires Mn(2+) as cofactor.

It catalyses the reaction 2-C-methyl-D-erythritol 4-phosphate + NADP(+) = 1-deoxy-D-xylulose 5-phosphate + NADPH + H(+). It participates in isoprenoid biosynthesis; isopentenyl diphosphate biosynthesis via DXP pathway; isopentenyl diphosphate from 1-deoxy-D-xylulose 5-phosphate: step 1/6. Its function is as follows. Catalyzes the NADPH-dependent rearrangement and reduction of 1-deoxy-D-xylulose-5-phosphate (DXP) to 2-C-methyl-D-erythritol 4-phosphate (MEP). The chain is 1-deoxy-D-xylulose 5-phosphate reductoisomerase from Blochmanniella floridana.